We begin with the raw amino-acid sequence, 201 residues long: Small ribosomal subunit protein uS4c (201 aa).

Residues leucine 15–glutamine 43 are disordered. One can recognise an S4 RNA-binding domain in the interval methionine 89–asparagine 150.

Belongs to the universal ribosomal protein uS4 family. In terms of assembly, part of the 30S ribosomal subunit. Contacts protein S5. The interaction surface between S4 and S5 is involved in control of translational fidelity.

The protein resides in the plastid. It localises to the chloroplast. Functionally, one of the primary rRNA binding proteins, it binds directly to 16S rRNA where it nucleates assembly of the body of the 30S subunit. With S5 and S12 plays an important role in translational accuracy. This is Small ribosomal subunit protein uS4c (rps4) from Liriodendron tulipifera (Tuliptree).